Reading from the N-terminus, the 153-residue chain is Insulin-like growth factor 1 (153 aa).

The tract at residues 49 to 77 (GPETLCGAELVDALQFVCGDRGFYFSKPT) is b. 3 disulfide bridges follow: C54–C96, C66–C109, and C95–C100. Residues 78-89 (GYGSSSRRLHHK) form a c region. Residues 90–110 (GIVDECCFQSCDLRRLEMYCA) form an a region. The interval 111–118 (PIKPPKSA) is d. A propeptide spans 119–153 (RSVRAQRHTDMPKAQKEVHLKNTSRGNTGNRNYRM) (e peptide). The segment at 119-153 (RSVRAQRHTDMPKAQKEVHLKNTSRGNTGNRNYRM) is disordered. Basic and acidic residues predominate over residues 125-138 (RHTDMPKAQKEVHL). Polar residues predominate over residues 139 to 153 (KNTSRGNTGNRNYRM).

It belongs to the insulin family. In terms of assembly, forms a ternary complex with IGFR1 and ITGAV:ITGB3. Forms a ternary complex with IGFR1 and ITGA6:ITGB4. Forms a ternary complex with IGFBP3 and ALS.

The protein localises to the secreted. In terms of biological role, the insulin-like growth factors, isolated from plasma, are structurally and functionally related to insulin but have a much higher growth-promoting activity. Acts as a ligand for IGF1R. Binds to the alpha subunit of IGF1R, leading to the activation of the intrinsic tyrosine kinase activity which autophosphorylates tyrosine residues in the beta subunit thus initiatiating a cascade of down-stream signaling events leading to activation of the PI3K-AKT/PKB and the Ras-MAPK pathways. Binds to integrins. Its binding to integrins and subsequent ternary complex formation with integrins and IGFR1 are essential for IGF1 signaling. This is Insulin-like growth factor 1 from Gallus gallus (Chicken).